The following is a 376-amino-acid chain: Ribonucleoside-diphosphate reductase subunit beta (376 aa).

Residues aspartate 85, glutamate 116, and histidine 119 each contribute to the Fe cation site. Residue tyrosine 123 is part of the active site. Residues glutamate 205, glutamate 239, and histidine 242 each coordinate Fe cation.

The protein belongs to the ribonucleoside diphosphate reductase small chain family. Tetramer of two alpha and two beta subunits. Fe cation serves as cofactor.

The catalysed reaction is a 2'-deoxyribonucleoside 5'-diphosphate + [thioredoxin]-disulfide + H2O = a ribonucleoside 5'-diphosphate + [thioredoxin]-dithiol. Provides the precursors necessary for DNA synthesis. Catalyzes the biosynthesis of deoxyribonucleotides from the corresponding ribonucleotides. The sequence is that of Ribonucleoside-diphosphate reductase subunit beta (nrdB) from Buchnera aphidicola subsp. Schizaphis graminum (strain Sg).